The chain runs to 195 residues: Rho-related protein racB (195 aa).

10-17 (GDGAVGKT) is a binding site for GTP. Residues 32–40 (YVPTVFDNY) carry the Effector region motif. GTP contacts are provided by residues 57–61 (DTAGQ) and 115–118 (TKCD). Cys192 bears the Cysteine methyl ester mark. Residue Cys192 is the site of S-geranylgeranyl cysteine attachment. The propeptide at 193-195 (SIL) is removed in mature form.

It belongs to the small GTPase superfamily. Rho family. In terms of assembly, interacts with pakB.

Its subcellular location is the cell membrane. This chain is Rho-related protein racB (racB), found in Dictyostelium discoideum (Social amoeba).